We begin with the raw amino-acid sequence, 100 residues long: Large ribosomal subunit protein bL21 (100 aa).

It belongs to the bacterial ribosomal protein bL21 family. As to quaternary structure, part of the 50S ribosomal subunit. Contacts protein L20.

This protein binds to 23S rRNA in the presence of protein L20. This is Large ribosomal subunit protein bL21 from Mycoplasma mycoides subsp. mycoides SC (strain CCUG 32753 / NCTC 10114 / PG1).